The chain runs to 142 residues: Large ribosomal subunit protein uL13 (142 aa).

The protein belongs to the universal ribosomal protein uL13 family. In terms of assembly, part of the 50S ribosomal subunit.

This protein is one of the early assembly proteins of the 50S ribosomal subunit, although it is not seen to bind rRNA by itself. It is important during the early stages of 50S assembly. The sequence is that of Large ribosomal subunit protein uL13 from Yersinia enterocolitica serotype O:8 / biotype 1B (strain NCTC 13174 / 8081).